Reading from the N-terminus, the 344-residue chain is Anthranilate phosphoribosyltransferase (344 aa).

Residues Gly85, Gly88–Asp89, Thr93, Asn95–Thr98, Lys113–Ser121, and Ser125 each bind 5-phospho-alpha-D-ribose 1-diphosphate. Anthranilate is bound at residue Gly85. Ser97 contributes to the Mg(2+) binding site. Arg171 is an anthranilate binding site. Mg(2+) is bound by residues Asp230 and Glu231.

It belongs to the anthranilate phosphoribosyltransferase family. Homodimer. Mg(2+) serves as cofactor.

The enzyme catalyses N-(5-phospho-beta-D-ribosyl)anthranilate + diphosphate = 5-phospho-alpha-D-ribose 1-diphosphate + anthranilate. Its pathway is amino-acid biosynthesis; L-tryptophan biosynthesis; L-tryptophan from chorismate: step 2/5. Its function is as follows. Catalyzes the transfer of the phosphoribosyl group of 5-phosphorylribose-1-pyrophosphate (PRPP) to anthranilate to yield N-(5'-phosphoribosyl)-anthranilate (PRA). The sequence is that of Anthranilate phosphoribosyltransferase from Acidovorax ebreus (strain TPSY) (Diaphorobacter sp. (strain TPSY)).